Consider the following 138-residue polypeptide: Large ribosomal subunit protein bL12c (138 aa).

This sequence belongs to the bacterial ribosomal protein bL12 family. In terms of assembly, homodimer. Part of the ribosomal stalk of the 50S ribosomal subunit. Forms a multimeric L10(L12)X complex, where L10 forms an elongated spine to which 2 to 4 L12 dimers bind in a sequential fashion. Binds GTP-bound translation factors.

It is found in the plastid. Functionally, forms part of the ribosomal stalk which helps the ribosome interact with GTP-bound translation factors. Is thus essential for accurate translation. The chain is Large ribosomal subunit protein bL12c from Euglena longa (Euglenophycean alga).